The sequence spans 144 residues: Large ribosomal subunit protein uL15 (144 aa).

The interval 1–56 (MELNTLAPAPGAKSSKKRVGRGIGSGLGKTGGRGHKGQKSRSGGSVKPGFEGGQMP) is disordered. Positions 21-31 (RGIGSGLGKTG) are enriched in gly residues.

It belongs to the universal ribosomal protein uL15 family. In terms of assembly, part of the 50S ribosomal subunit.

Functionally, binds to the 23S rRNA. The polypeptide is Large ribosomal subunit protein uL15 (Idiomarina loihiensis (strain ATCC BAA-735 / DSM 15497 / L2-TR)).